The following is a 401-amino-acid chain: Mannonate dehydratase (401 aa).

Belongs to the mannonate dehydratase family. It depends on Fe(2+) as a cofactor. Mn(2+) serves as cofactor.

It catalyses the reaction D-mannonate = 2-dehydro-3-deoxy-D-gluconate + H2O. It participates in carbohydrate metabolism; pentose and glucuronate interconversion. In terms of biological role, catalyzes the dehydration of D-mannonate. The protein is Mannonate dehydratase of Brucella melitensis biotype 2 (strain ATCC 23457).